A 403-amino-acid polypeptide reads, in one-letter code: Large ribosomal subunit protein uL3 (403 aa).

The segment at 1 to 37 (MSHRKFSAPRHGSLGFLPRKRSSRHRGKVKSFPKDDP) is disordered. Ser-13 carries the phosphoserine modification. A compositionally biased stretch (basic residues) spans 18-31 (PRKRSSRHRGKVKS). Lys-39 is covalently cross-linked (Glycyl lysine isopeptide (Lys-Gly) (interchain with G-Cter in SUMO2)). Lys-136 carries the N6-acetyllysine modification. Residues Lys-224 and Lys-226 each participate in a glycyl lysine isopeptide (Lys-Gly) (interchain with G-Cter in SUMO2) cross-link. His-245 carries the post-translational modification Tele-methylhistidine. N6-acetyllysine; alternate occurs at positions 286 and 294. A Glycyl lysine isopeptide (Lys-Gly) (interchain with G-Cter in SUMO2); alternate cross-link involves residue Lys-286. Lys-294 participates in a covalent cross-link: Glycyl lysine isopeptide (Lys-Gly) (interchain with G-Cter in SUMO1); alternate. Ser-304 is modified (phosphoserine). The residue at position 366 (Lys-366) is an N6-acetyllysine; alternate. Residue Lys-366 forms a Glycyl lysine isopeptide (Lys-Gly) (interchain with G-Cter in SUMO2); alternate linkage. An N6-acetyllysine modification is found at Lys-373. Glycyl lysine isopeptide (Lys-Gly) (interchain with G-Cter in SUMO2) cross-links involve residues Lys-386, Lys-393, and Lys-399.

Belongs to the universal ribosomal protein uL3 family. Component of the large ribosomal subunit. Interacts with DHX33. Post-translationally, constitutively monomethylated at His-245 by METTL18. Methylation at His-245 regulates translation elongation by slowing ribosome traversal on tyrosine codons: slower elongation provides enough time for proper folding of synthesized proteins and prevents cellular aggregation of tyrosine-rich proteins. It is not required for incorporation of RPL3 into ribosomes.

The protein resides in the nucleus. Its subcellular location is the nucleolus. The protein localises to the cytoplasm. In terms of biological role, component of the large ribosomal subunit. The ribosome is a large ribonucleoprotein complex responsible for the synthesis of proteins in the cell. The protein is Large ribosomal subunit protein uL3 (RPL3) of Oryctolagus cuniculus (Rabbit).